The primary structure comprises 736 residues: DNA ligase (736 aa).

Residues 41-45, 91-92, and glutamate 125 each bind NAD(+); these read DQEYD and SL. Lysine 127 serves as the catalytic N6-AMP-lysine intermediate. An NAD(+)-binding site is contributed by arginine 148. Residues 170–205 are disordered; the sequence is ELTPLPLAGGAGGGPLDDSGSAPTPDPSRRREGKWN. Residues glutamate 215, lysine 347, and lysine 371 each contribute to the NAD(+) site. Positions 463, 466, 481, and 487 each coordinate Zn(2+). Residues 656 to 736 enclose the BRCT domain; that stretch reads TLDSPVAGKT…GWAEIVAAAG (81 aa).

It belongs to the NAD-dependent DNA ligase family. LigA subfamily. Mg(2+) is required as a cofactor. Mn(2+) serves as cofactor.

The catalysed reaction is NAD(+) + (deoxyribonucleotide)n-3'-hydroxyl + 5'-phospho-(deoxyribonucleotide)m = (deoxyribonucleotide)n+m + AMP + beta-nicotinamide D-nucleotide.. Functionally, DNA ligase that catalyzes the formation of phosphodiester linkages between 5'-phosphoryl and 3'-hydroxyl groups in double-stranded DNA using NAD as a coenzyme and as the energy source for the reaction. It is essential for DNA replication and repair of damaged DNA. This Erythrobacter litoralis (strain HTCC2594) protein is DNA ligase.